We begin with the raw amino-acid sequence, 20 residues long: Agglutinin beta-3 chain (20 aa).

A disordered region spans residues Gly-1–Asn-20.

It belongs to the jacalin lectin family. Formed of four alpha chains and four beta chains.

D-galactose-specific lectin, binds the T-antigen structure Gal-beta1,3-GalNAc. In Maclura pomifera (Osage orange), this protein is Agglutinin beta-3 chain.